Reading from the N-terminus, the 122-residue chain is Large ribosomal subunit protein uL14 (122 aa).

Belongs to the universal ribosomal protein uL14 family. As to quaternary structure, part of the 50S ribosomal subunit. Forms a cluster with proteins L3 and L19. In the 70S ribosome, L14 and L19 interact and together make contacts with the 16S rRNA in bridges B5 and B8.

Binds to 23S rRNA. Forms part of two intersubunit bridges in the 70S ribosome. This chain is Large ribosomal subunit protein uL14, found in Novosphingobium aromaticivorans (strain ATCC 700278 / DSM 12444 / CCUG 56034 / CIP 105152 / NBRC 16084 / F199).